The sequence spans 586 residues: Kelch-like protein 7 (586 aa).

In terms of domain architecture, BTB spans Cys44–Ser111. Residues Cys146–Gln248 enclose the BACK domain. Kelch repeat units follow at residues Arg294–Asn336, Val337–Gly382, Lys383–Gly430, Leu431–Asp481, Ile483–Ser528, and Val530–Asp575.

In terms of assembly, homodimer. Component of the BCR(KLHL7) E3 ubiquitin ligase complex.

Its subcellular location is the nucleus. The protein resides in the cytoplasm. Its pathway is protein modification; protein ubiquitination. Its function is as follows. Substrate-specific adapter of a BCR (BTB-CUL3-RBX1) E3 ubiquitin ligase complex. The BCR(KLHL7) complex acts by mediating ubiquitination and subsequent degradation of substrate proteins. Probably mediates 'Lys-48'-linked ubiquitination. This Gallus gallus (Chicken) protein is Kelch-like protein 7 (KLHL7).